The sequence spans 427 residues: Thyroid hormone receptor alpha-A (427 aa).

A compositionally biased stretch (basic and acidic residues) spans 1 to 11; sequence MENTEQEHNLP. A disordered region spans residues 1–40; sequence MENTEQEHNLPEGDETQWPNGVKRKRKNSQCSMNSTSDKS. Positions 1 to 56 are modulating; it reads MENTEQEHNLPEGDETQWPNGVKRKRKNSQCSMNSTSDKSISVPGYVPSYLEKDEP. Positions 29-40 are enriched in polar residues; it reads SQCSMNSTSDKS. 2 NR C4-type zinc fingers span residues 57-77 and 95-119; these read CVVC…CEGC and CKYD…FRKC. A DNA-binding region (nuclear receptor) is located at residues 57–131; it reads CVVCGDKATG…VGMAMDLVLD (75 aa). The NR LBD domain occupies 167–410; it reads SEWELIRMVT…PPLFLEVFED (244 aa).

It belongs to the nuclear hormone receptor family. NR1 subfamily. As to quaternary structure, interacts with ncoa2. After the mid-blastula transition (MBT), expressed throughout the deep cells, which give rise to the embryo proper. In adults, isoform 2 shows highest expression in the eye and liver. Expressed in adult gonads.

It localises to the nucleus. Functionally, high affinity receptor for triiodothyronine. In the absence of thyroid hormone during late blastula stage development, acts as a transcriptional repressor. Whereas in the presence of thyroid hormone, can act as an activator of transcription. In addition, represses retinoic acid (RA)-signaling during blastula and gastrula stages of development. This is Thyroid hormone receptor alpha-A (thraa) from Danio rerio (Zebrafish).